Consider the following 274-residue polypeptide: Large ribosomal subunit protein uL2 (274 aa).

Positions 195 to 274 (VGNSDHGLER…SKYIIERRKK (80 aa)) are disordered. Basic residues-rich tracts occupy residues 207-220 (KAGR…RPRN) and 244-264 (PRSR…KKQS).

The protein belongs to the universal ribosomal protein uL2 family. As to quaternary structure, part of the 50S ribosomal subunit. Forms a bridge to the 30S subunit in the 70S ribosome.

One of the primary rRNA binding proteins. Required for association of the 30S and 50S subunits to form the 70S ribosome, for tRNA binding and peptide bond formation. It has been suggested to have peptidyltransferase activity; this is somewhat controversial. Makes several contacts with the 16S rRNA in the 70S ribosome. This is Large ribosomal subunit protein uL2 from Bacteroides thetaiotaomicron (strain ATCC 29148 / DSM 2079 / JCM 5827 / CCUG 10774 / NCTC 10582 / VPI-5482 / E50).